The following is a 698-amino-acid chain: Ion-translocating oxidoreductase complex subunit C (698 aa).

4Fe-4S ferredoxin-type domains lie at 366–397 (TEMG…QQLY) and 407–436 (KARN…VQYY). Cys377, Cys380, Cys383, Cys387, Cys416, Cys419, Cys422, and Cys426 together coordinate [4Fe-4S] cluster.

It belongs to the 4Fe4S bacterial-type ferredoxin family. RnfC subfamily. As to quaternary structure, the complex is composed of six subunits: RnfA, RnfB, RnfC, RnfD, RnfE and RnfG. [4Fe-4S] cluster serves as cofactor.

The protein localises to the cell inner membrane. Part of a membrane-bound complex that couples electron transfer with translocation of ions across the membrane. This is Ion-translocating oxidoreductase complex subunit C from Yersinia pseudotuberculosis serotype O:1b (strain IP 31758).